Reading from the N-terminus, the 288-residue chain is Protein RepA (288 aa).

Belongs to the initiator RepB protein family.

Functionally, this protein is essential for plasmid replication; it is involved in copy control functions. The sequence is that of Protein RepA (repA) from Escherichia coli.